A 212-amino-acid chain; its full sequence is Thymidylate kinase (212 aa).

7-14 (GIEGCGKS) is an ATP binding site.

The protein belongs to the thymidylate kinase family.

The catalysed reaction is dTMP + ATP = dTDP + ADP. In terms of biological role, phosphorylation of dTMP to form dTDP in both de novo and salvage pathways of dTTP synthesis. This chain is Thymidylate kinase, found in Trichlorobacter lovleyi (strain ATCC BAA-1151 / DSM 17278 / SZ) (Geobacter lovleyi).